The sequence spans 258 residues: Envelope glycoprotein L (258 aa).

A signal peptide spans 1 to 31; it reads MYECMFFSHRLTIGFYIPLIVLTTMSSLSES. The gL betaherpesvirus-type domain occupies 36-243; sequence QKTACTVAAI…ILYQASLSGP (208 aa). Cys145 and Cys150 are joined by a disulfide.

The protein belongs to the herpesviridae glycoprotein L (gL) family. Betaherpesvirinae gL subfamily. Interacts with glycoprotein H (gH); this interaction is necessary for the correct processing and cell surface expression of gH. Forms the envelope pentamer complex (PC) composed of gH, gL, UL128, UL130, and UL131A. The pentamer interacts with host NRP2. Forms the envelope trimer complex composed of gH, gL, and gO. The trimer interacts with host PDGFRA.

It is found in the virion membrane. Its subcellular location is the host cell membrane. The protein resides in the host Golgi apparatus. The protein localises to the host trans-Golgi network. Its function is as follows. The heterodimer glycoprotein H-glycoprotein L is required for the fusion of viral and plasma membranes leading to virus entry into the host cell. Acts as a functional inhibitor of gH and maintains gH in an inhibited form. Upon binding to host integrins, gL dissociates from gH leading to activation of the viral fusion glycoproteins gB and gH. In human cytomegalovirus, forms two distincts complexes to mediate viral entry, a trimer and a pentamer at the surface of the virion envelope. The gH-gL-gO trimer is required for infection in fibroblasts by interacting with host PDGFRA. The gH-gL-UL128-UL130-UL131A pentamer is essential for viral entry in epithelial, endothelial and myeloid cells via interaction with host NRP2. The protein is Envelope glycoprotein L of Guinea pig cytomegalovirus (strain 22122) (GPCMV).